A 282-amino-acid polypeptide reads, in one-letter code: Large ribosomal subunit protein uL4c (282 aa).

The transit peptide at 1–49 (MASSATAPNSLSFFSSSLFLSSSHQIPKTYISVSKLGSGRVSKPLSVSS) directs the protein to the chloroplast. The interval 106–138 (EVRGGGIKPYSQKKTGHARRGSQRTPLRPGGGV) is disordered.

This sequence belongs to the universal ribosomal protein uL4 family. In terms of assembly, part of the 50S ribosomal subunit.

The protein localises to the plastid. Its subcellular location is the chloroplast. Functionally, this protein binds directly and specifically to 23S rRNA. May play a role in plastid transcriptional regulation. The polypeptide is Large ribosomal subunit protein uL4c (RPL4) (Arabidopsis thaliana (Mouse-ear cress)).